The chain runs to 436 residues: Hydrogenobyrinate a,c-diamide synthase (436 aa).

The GATase cobBQ-type domain maps to 244 to 435; the sequence is HIAVARDDAF…MHVIDFCGEK (192 aa). Cys-327 serves as the catalytic Nucleophile.

It belongs to the CobB/CbiA family. The cofactor is Mg(2+).

The catalysed reaction is hydrogenobyrinate + 2 L-glutamine + 2 ATP + 2 H2O = hydrogenobyrinate a,c-diamide + 2 L-glutamate + 2 ADP + 2 phosphate + 2 H(+). The protein operates within cofactor biosynthesis; adenosylcobalamin biosynthesis; cob(II)yrinate a,c-diamide from precorrin-2 (aerobic route): step 9/10. Functionally, catalyzes the ATP-dependent amidation of the two carboxylate groups at positions a and c of hydrogenobyrinate, using either L-glutamine or ammonia as the nitrogen source. The chain is Hydrogenobyrinate a,c-diamide synthase from Brucella anthropi (strain ATCC 49188 / DSM 6882 / CCUG 24695 / JCM 21032 / LMG 3331 / NBRC 15819 / NCTC 12168 / Alc 37) (Ochrobactrum anthropi).